We begin with the raw amino-acid sequence, 1855 residues long: Unconventional myosin-Va (1855 aa).

Ala-2 bears the N-acetylalanine mark. The Myosin N-terminal SH3-like domain occupies 8–60; it reads TKFARVWIPDPEEVWKSAELLKDYKPGDKVLLLHLEEGKDLEYHLDPKTKELP. A Myosin motor domain is found at 69 to 763; it reads VGENDLTALS…QVAYLEKLRA (695 aa). Position 163–170 (163–170) interacts with ATP; sequence GESGAGKT. A disordered region spans residues 598-631; the sequence is AISPTSATSSGRTPLTRTPAKPTKGRPGQMAKEH. A Phosphoserine modification is found at Ser-600. The segment covering 600–613 has biased composition (polar residues); the sequence is SPTSATSSGRTPLT. The segment at 643-665 is actin-binding; the sequence is LHLLMETLNATTPHYVRCIKPND. 6 IQ domains span residues 766–788, 789–818, 814–836, 837–861, 862–883, and 885–914; these read LRAACIRIQKTIRGWLLRKKYLR, MRKAAITMQRYVRGYQARCYAKFLRRTKAA, RTKAATIIQKYWRMYVVRRRYKI, RRAATIVLQSYLRGFLARNRYRKIL, REHKAVIIQKRVRGWLARTHYK, and SMHAIIYLQCCFRRMMAKRELKKLKIEARS. 2 coiled-coil regions span residues 914-1237 and 1338-1445; these read SVER…APEV and VYEG…ELEV. Phosphothreonine is present on Thr-1032. 2 positions are modified to phosphoserine: Ser-1452 and Ser-1652. The Dilute domain maps to 1534 to 1810; it reads TSTINSIKKV…IRTIQMRLRD (277 aa). At Thr-1760 the chain carries Phosphothreonine.

Belongs to the TRAFAC class myosin-kinesin ATPase superfamily. Myosin family. In terms of assembly, may be a homodimer, which associates with multiple calmodulin or myosin light chains. Interacts with RIPL2, the interaction is required for its role in dendrite formation. Interacts with MLPH. Interacts with SYTL4. Interacts with MYRIP. Interacts with RAB10; mediates the transport to the plasma membrane of SLC2A4/GLUT4 storage vesicles. Interacts with FMR1; this interaction occurs in association with polyribosome. Detected in melanocytes.

The catalysed reaction is ATP + H2O = ADP + phosphate + H(+). In terms of biological role, processive actin-based motor that can move in large steps approximating the 36-nm pseudo-repeat of the actin filament. Can hydrolyze ATP in the presence of actin, which is essential for its function as a motor protein. Involved in melanosome transport. Also mediates the transport of vesicles to the plasma membrane. May also be required for some polarization process involved in dendrite formation. The chain is Unconventional myosin-Va (MYO5A) from Homo sapiens (Human).